The chain runs to 151 residues: Mitochondrial intermembrane space import and assembly protein 40 homolog (151 aa).

The disordered stretch occupies residues 1-35 (MGQGLSQPAQAVEEPSPPAVEAAPSSSPSPAPAPS). Over residues 7-26 (QPAQAVEEPSPPAVEAAPSS) the composition is skewed to low complexity. Cystine bridges form between C65/C67, C76/C109, and C86/C99. Positions 73–117 (NGPCGSQFVDAFSCFLKSTEEEKGSDCVKPFIALQDCIKINPEAF) constitute a CHCH domain. Short sequence motifs (cx9C motif) lie at residues 76-86 (CGSQFVDAFSC) and 99-109 (CVKPFIALQDC). Residues 123 to 151 (EEEENDEEAEKSNLKVRAPAWSRESKPKL) are disordered.

It localises to the mitochondrion intermembrane space. It is found in the peroxisome matrix. Its function is as follows. Required for the import and folding of small cysteine-containing proteins in the mitochondrial intermembrane space. The protein is Mitochondrial intermembrane space import and assembly protein 40 homolog of Oryza sativa subsp. japonica (Rice).